The sequence spans 163 residues: MMKLENKLHRVLCSLHQNSISTHKTYVAVAAQDEYVRMGKVSLPRMYAVKPRIQKNFQDNYRFYGTLLCICWLYFFIWYPFALLALMVGVFLSFVMHGLGSLTINQNIRLDPKYSIPGVCAVTLIVIMFLAPVGRLFWSFCIVSSFAGLHCLLTTYENPAGIL.

A run of 4 helical transmembrane segments spans residues 61 to 78, 82 to 104, 114 to 134, and 136 to 156; these read YRFYGTLLCICWLYFFIW, ALLALMVGVFLSFVMHGLGSLTI, YSIPGVCAVTLIVIMFLAPVG, and LFWSFCIVSSFAGLHCLLTTY.

The protein resides in the membrane. Its function is as follows. Has a role in meiosis. In Schizosaccharomyces pombe (strain 972 / ATCC 24843) (Fission yeast), this protein is Meiotically up-regulated gene 109 protein (mug109).